Here is a 1483-residue protein sequence, read N- to C-terminus: MNGVAFCLVGIPPRPEPRPPQLPLGPRDGCSSGRPLPWPGPRTLLLRKSLQDGFGFTLRHFIVYPPESAVHCILKEEENGGRGGGPSPRHRLEPMDTIFVKNVKDGGPAHRAGLRTGDRLVKVNGESIIGKTYSQVIGLIQNSDDTLELSIMPKDEDILQLAYSQDAYLKGNEPYSGEARSIPEPPPLCYPRKTYAPPTRAPAWATMVPEPISALPPDPRSPAAWSDPGSRVPSATRAHLDNSSLGMSQPRPSPGAFPHLPSESRTPRAFPEPGSRVLPSRLECQQALSHWLSNQIPRRAGERRCPAMPPRARSASQDRLEDVTTHHPWPCSTSQDALSQLGQEGWHRARSDDYLSRATRSAEALGPGALVSPRLERCGWASQRPSARTSACPSRDLTQAPPPSGLQGLDDIGYIGYRSYSPSFQRRTGLLHALSFRDSPFGGLPTFSLAQSPASFPPEASEPPRVVRPDPSTRALEPPAEDHRDEVVLRQKPPTGRKVQLTPARQMNLGFGDESPEPEARGERLGRKVAPLATTEDSLASIPFIDEPTSPSIDLQAKHVPASAVVSSAMNSAPVLGTSPSSPTFTFALSRHYSQDCSSIKAGRRSSYLLAITTERSKSCDDGLNTFRDEGRVLRRLPSRVPSLRVLRSFFTDGSLDSWGTSEDADAPSKRHSTSDLSDATFSDIRREGWLYYKQILTKKGKKAGGGLRQWKRVYAVLRARSLSLSKERREPGPAAAGAAAAGAGEDEAAPVCIGSCLVDISYSETKRRHVFRLTTADFCEYLFQAEDRDDMLGWIRAIRENSRAEGEDPGCANQALISKKLNDYRKVSHSSGPKADSSPKGSRGLGGLKSEFLKQTAVRGLRTQEQPPGSKEDSVAAPKTPWGINIIKKNKKAAPRAFGIRLEECQPATENQRVPLIVAACCRIVEARGLESTGIYRVPGNNAVVSSLQEQLNRGPSDINLQDERWQDLNVISSLLKAFFRKLPEPLFTDDKYNDFIEANRIEDSRERMKTLRKLIRDLPGHYYETLKFLVGHLKTIADHSEKNKMEPRNLALVFGPTLVRTSEDNMTDMVTHMPDRYKIVETLIQHSDWFFSDDEDKGERTPVDDKEPQSVPNIEYLLPNIGRTVPPSDPGSDSTTCSSAKSKGSWVPKKEPYAREMLAISFISAVNRKRKKRREARGLGSSTDDDSEQEAHKAAVGTQEPPEGQLPGPAAEEAPGRLSPPTAPDERPAADTRSIVSGYSTLSTMDRSVCSGTGGRRAGAGDEADDERSELSHVETDTEGGAGPGGRLSRRPSFSSHHLMPCDTLARRRLSRSRAEAEGPGAGTARACPRGPEPPGSASSSSQESLRPPAAAPALGSRPSRVEALRLRLRGTADDMLAVRLRRPLSPETRRRRSSWRRHTVVVQSPLTDLNFNEWKELGGGGPQESVGVRPHSDNKDSGLSSLESTKARASSAASLPSGDLGALQGLPQRRSAAARLHQCL.

The segment at 15 to 34 (PEPRPPQLPLGPRDGCSSGR) is disordered. Residues 71–155 (HCILKEEENG…TLELSIMPKD (85 aa)) form the PDZ domain. Disordered regions lie at residues 212 to 276 (ISAL…PGSR) and 300 to 345 (AGER…GQEG). Basic and acidic residues predominate over residues 316-325 (SQDRLEDVTT). Residues 331–342 (CSTSQDALSQLG) show a composition bias toward polar residues. S361 and S372 each carry phosphoserine. The tract at residues 385-407 (PSARTSACPSRDLTQAPPPSGLQ) is disordered. S421 carries the phosphoserine modification. 2 disordered regions span residues 448 to 485 (SLAQ…DHRD) and 508 to 527 (NLGF…RLGR). A phosphoserine mark is found at S515, S579, S607, and S619. T652 carries the phosphothreonine modification. Phosphoserine is present on residues S655, S658, and S673. The PH domain maps to 684–804 (DIRREGWLYY…WIRAIRENSR (121 aa)). The disordered stretch occupies residues 827 to 848 (KVSHSSGPKADSSPKGSRGLGG). Residue K850 forms a Glycyl lysine isopeptide (Lys-Gly) (interchain with G-Cter in SUMO2) linkage. Disordered stretches follow at residues 860–879 (RGLR…VAAP), 1093–1150 (FSDD…SWVP), 1171–1361 (KRKK…GSRP), and 1419–1469 (ELGG…LQGL). Positions 901–1093 (IRLEECQPAT…TLIQHSDWFF (193 aa)) constitute a Rho-GAP domain. The span at 1099–1110 (KGERTPVDDKEP) shows a compositional bias: basic and acidic residues. 2 stretches are compositionally biased toward polar residues: residues 1133-1144 (GSDSTTCSSAKS) and 1236-1248 (SIVS…STMD). Positions 1338–1351 (GSASSSSQESLRPP) are enriched in low complexity. Polar residues predominate over residues 1440 to 1457 (SGLSSLESTKARASSAAS).

Its function is as follows. GTPase activator for the Rho-type GTPases by converting them to an inactive GDP-bound state. The sequence is that of Rho GTPase-activating protein 23 (Arhgap23) from Mus musculus (Mouse).